We begin with the raw amino-acid sequence, 115 residues long: ATP synthase subunit g, mitochondrial (115 aa).

Residue methionine 1 is modified to N-acetylmethionine. Phosphoserine is present on residues serine 3 and serine 62.

The protein belongs to the ATPase g subunit family. In terms of assembly, F-type ATPases have 2 components, CF(1) - the catalytic core - and CF(0) - the membrane proton channel. In yeast, the dimeric form of ATP synthase consists of 17 polypeptides: alpha, beta, gamma, delta, epsilon, 4 (B), 5 (OSCP), 6 (A), 8, 9 (C), d, E (Tim11), f, g, h, i/j and k. Phosphorylation on Ser-62 impairs ATP synthase dimerization.

It is found in the mitochondrion membrane. Its function is as follows. Mitochondrial membrane ATP synthase (F(1)F(0) ATP synthase or Complex V) produces ATP from ADP in the presence of a proton gradient across the membrane which is generated by electron transport complexes of the respiratory chain. F-type ATPases consist of two structural domains, F(1) - containing the extramembraneous catalytic core, and F(0) - containing the membrane proton channel, linked together by a central stalk and a peripheral stalk. During catalysis, ATP synthesis in the catalytic domain of F(1) is coupled via a rotary mechanism of the central stalk subunits to proton translocation. Part of the complex F(0) domain. Minor subunit located with subunit a in the membrane. The polypeptide is ATP synthase subunit g, mitochondrial (ATP20) (Saccharomyces cerevisiae (strain ATCC 204508 / S288c) (Baker's yeast)).